A 695-amino-acid chain; its full sequence is MANKREFPLDKTRNIGIMAHIDAGKTTTTERILYYTGKIHKIGETHEGASQMDWMEQEQERGITITSAATTAEWKGNRVNIIDTPGHVDFTIEVERSLRVLDGAITVLDAQSGVEPQTENVWRQATTYGVPRIVFVNKMDKLGANFDYSMTTLEDRLQANAHAVQMPIGAEDEFQGVIDLIEMQADIYDEDELGAKWDTVDVPADYLEEATKRRAELVEAVADVNDDIMDKYLEGEEISKEELKAAIRQATIDLKFFPVFAGSAFKNKGVQMLMDGVVDYLPSPLDVRPYNAKNPEDDSEVELMAGDDKPFAGLAFKIATDPFVGRLTFFRVYTGTLQSGSYILNATKDKRERVGRLLQMHSNHRNEIPEVFSGDIAAAIGLKNTTTGDSLTDVDHPLILESMEFPDPVIQVSVEPESKEDRDKLDLALQKLAEEDPTFKAETNNETGETLISGMGELHLDIMVDRMRREFKVVAKIGEPQVAYRETFTKQASAQGKFVRQSGGKGQYGDVWVEFTPNEEGKGFEFEDAIVGGVVPREYIPSVEQGLKESMANGVLAGYPLIDVKAKLYDGSYHDVDSNESAFKIAASMALKNAAKQAGAEILEPIMKVEVIAPEEYLGDIMGQVTARRGAVEGMEARGNAQIVNAMVPLSEMFGYATTLRSATQGRGTFTMVFDHYSAVPKSIQEEIIKKNGGQ.

The 276-residue stretch at 10–285 folds into the tr-type G domain; sequence DKTRNIGIMA…GVVDYLPSPL (276 aa). Residues 19-26, 83-87, and 137-140 contribute to the GTP site; these read AHIDAGKT, DTPGH, and NKMD.

This sequence belongs to the TRAFAC class translation factor GTPase superfamily. Classic translation factor GTPase family. EF-G/EF-2 subfamily.

The protein localises to the cytoplasm. In terms of biological role, catalyzes the GTP-dependent ribosomal translocation step during translation elongation. During this step, the ribosome changes from the pre-translocational (PRE) to the post-translocational (POST) state as the newly formed A-site-bound peptidyl-tRNA and P-site-bound deacylated tRNA move to the P and E sites, respectively. Catalyzes the coordinated movement of the two tRNA molecules, the mRNA and conformational changes in the ribosome. The protein is Elongation factor G of Latilactobacillus sakei subsp. sakei (strain 23K) (Lactobacillus sakei subsp. sakei).